Here is a 282-residue protein sequence, read N- to C-terminus: MEPKVAELKQKIEDTLCPFGFEVYPFQVAWYNELLPPAFHLPLPGPTLAFLVLSTPAMFDRALKPFLQSCHLRMLTDPVDQCVAYHLGRVRESLPELQIEIIADYEVHPNRRPKILAQTAAHVAGAAYYYQRQDVEADPWGNQRISGVCIHPRFGGWFAIRGVVLLPGIEVPDLPPRKPHDCVPTRADRIALLEGFNFHWRDWTYRDAVTPQERYSEEQKAYFSTPPAQRLALLGLAQPSEKPSSPSPDLPFTTPAPKKPGNPSRARSWLSPRVSPPASPGP.

Substrate is bound by residues D104, 115–118, 129–131, C149, and I160; these read ILAQ and YYQ. The disordered stretch occupies residues 234 to 282; the sequence is LGLAQPSEKPSSPSPDLPFTTPAPKKPGNPSRARSWLSPRVSPPASPGP. S245, S247, S275, and S279 each carry phosphoserine.

It belongs to the MMACHC family. As to quaternary structure, monomer in the absence of bound substrate. Homodimer; dimerization is triggered by binding to FMN or adenosylcobalamin. Interacts with LMBRD1 and ABCD4; the interaction ensures the transport of cobalamin from the lysosome to the cytoplasm. Forms a multiprotein complex with MMADHC, MTR and MTRR; the interaction with MTR could modulate MMACHC-dependent processing of cobalamin. Heterodimer with MMADHC; the interaction might play a role in the regulation of the balance between AdoCbl and MeCbl synthesis. The cofactor is FAD. FMN is required as a cofactor. As to expression, widely expressed. Expressed at higher level in fetal liver. Also expressed in spleen, lymph node, thymus and bone marrow. Weakly or not expressed in peripheral blood leukocytes.

The protein localises to the cytoplasm. It is found in the cytosol. It carries out the reaction 2 cob(II)alamin-[cyanocobalamin reductase] + 2 hydrogen cyanide + NADP(+) = 2 cyanocob(III)alamin + 2 apo-[cyanocobalamin reductase] + NADPH + H(+). The catalysed reaction is apo-[alkylcobalamin reductase] + an R-cob(III)alamin + glutathione = cob(I)alamin-[alkylcobalamin reductase] + an S-substituted glutathione + H(+). The enzyme catalyses apo-[alkylcobalamin reductase] + methylcob(III)alamin + glutathione = S-methyl glutathione + cob(I)alamin-[alkylcobalamin reductase] + H(+). It catalyses the reaction apo-[alkylcobalamin reductase] + adenosylcob(III)alamin + glutathione = S-adenosylglutathione + cob(I)alamin-[alkylcobalamin reductase] + H(+). Its function is as follows. Cobalamin (vitamin B12) cytosolic chaperone that catalyzes the reductive decyanation of cyanocob(III)alamin (cyanocobalamin, CNCbl) to yield cob(II)alamin and cyanide, using FAD or FMN as cofactors and NADPH as cosubstrate. Cyanocobalamin constitutes the inactive form of vitamin B12 introduced from the diet, and is converted into the active cofactors methylcobalamin (MeCbl) involved in methionine biosynthesis, and 5'-deoxyadenosylcobalamin (AdoCbl) involved in the TCA cycle. Forms a complex with the lysosomal transporter ABCD4 and its chaperone LMBRD1, to transport cobalamin across the lysosomal membrane into the cytosol. The processing of cobalamin in the cytosol occurs in a multiprotein complex composed of at least MMACHC, MMADHC, MTRR (methionine synthase reductase) and MTR (methionine synthase) which may contribute to shuttle safely and efficiently cobalamin towards MTR in order to produce methionine. Also acts as a glutathione transferase by catalyzing the dealkylation of the alkylcob(III)alamins MeCbl and AdoCbl, using the thiolate of glutathione for nucleophilic displacement to generate cob(I)alamin and the corresponding glutathione thioether. The conversion of incoming MeCbl or AdoCbl into a common intermediate cob(I)alamin is necessary to meet the cellular needs for both cofactors. Cysteine and homocysteine cannot substitute for glutathione in this reaction. This Homo sapiens (Human) protein is Cyanocobalamin reductase / alkylcobalamin dealkylase.